The chain runs to 106 residues: Pyrimidine/purine nucleoside phosphorylase (106 aa).

This sequence belongs to the nucleoside phosphorylase PpnP family.

The enzyme catalyses a purine D-ribonucleoside + phosphate = a purine nucleobase + alpha-D-ribose 1-phosphate. It carries out the reaction adenosine + phosphate = alpha-D-ribose 1-phosphate + adenine. The catalysed reaction is cytidine + phosphate = cytosine + alpha-D-ribose 1-phosphate. It catalyses the reaction guanosine + phosphate = alpha-D-ribose 1-phosphate + guanine. The enzyme catalyses inosine + phosphate = alpha-D-ribose 1-phosphate + hypoxanthine. It carries out the reaction thymidine + phosphate = 2-deoxy-alpha-D-ribose 1-phosphate + thymine. The catalysed reaction is uridine + phosphate = alpha-D-ribose 1-phosphate + uracil. It catalyses the reaction xanthosine + phosphate = alpha-D-ribose 1-phosphate + xanthine. Functionally, catalyzes the phosphorolysis of diverse nucleosides, yielding D-ribose 1-phosphate and the respective free bases. Can use uridine, adenosine, guanosine, cytidine, thymidine, inosine and xanthosine as substrates. Also catalyzes the reverse reactions. This chain is Pyrimidine/purine nucleoside phosphorylase, found in Burkholderia cenocepacia (strain ATCC BAA-245 / DSM 16553 / LMG 16656 / NCTC 13227 / J2315 / CF5610) (Burkholderia cepacia (strain J2315)).